A 123-amino-acid polypeptide reads, in one-letter code: Aberrant microtubules protein 1 (123 aa).

Functionally, required for normal microtubule organization. The sequence is that of Aberrant microtubules protein 1 (ABM1) from Saccharomyces cerevisiae (strain ATCC 204508 / S288c) (Baker's yeast).